The chain runs to 80 residues: RNA-binding protein Hfq (80 aa).

The 61-residue stretch at 10–70 (DLFLNTVRKQ…ISTIMPGQPM (61 aa)) folds into the Sm domain.

It belongs to the Hfq family. Homohexamer.

In terms of biological role, RNA chaperone that binds small regulatory RNA (sRNAs) and mRNAs to facilitate mRNA translational regulation in response to envelope stress, environmental stress and changes in metabolite concentrations. Also binds with high specificity to tRNAs. The polypeptide is RNA-binding protein Hfq (Rhizobium etli (strain CIAT 652)).